A 976-amino-acid polypeptide reads, in one-letter code: Terminal uridylyltransferase 1 (976 aa).

2 disordered regions span residues methionine 1–phenylalanine 47 and threonine 129–glycine 185. The tract at residues methionine 1–glycine 188 is required for oligomerization and may contribute to the incorporation into the MPsome complex. Residues alanine 147–threonine 183 are compositionally biased toward acidic residues. The segment at valine 190–leucine 221 adopts a C2H2-type; atypical zinc-finger fold. Residues cysteine 195, cysteine 198, histidine 212, and histidine 217 each contribute to the Zn(2+) site. UTP is bound by residues serine 298 and alanine 309 to aspartate 312. Residues aspartate 310 and aspartate 312 each coordinate Mg(2+). Residue arginine 358 participates in RNA binding. The PAP-associated domain occupies alanine 366–aspartate 425. Residues glycine 480–serine 484, lysine 505, lysine 509, and serine 523–tyrosine 524 each bind UTP. The Nucleotide recognition motif (NRM) motif lies at isoleucine 652–asparagine 661. Residues aspartate 700–arginine 976 form an important for catalytic activity and RNA binding region. Residues serine 732–serine 755 form a disordered region.

It belongs to the DNA polymerase type-B-like family. Oligomer. Component of the mitochondrial 3' processome (MPsome) complex composed at least of terminal uridylyltransferase KRET1/TUT1, 3'-5' exonuclease DSS1, MPSS1, MPSS2 and MPSS3. Within the complex, interacts with DSS1, MPSS1 and MPSS3. Requires Mg(2+) as cofactor. Mn(2+) serves as cofactor.

Its subcellular location is the mitochondrion. The catalysed reaction is RNA(n) + UTP = RNA(n)-3'-uridine ribonucleotide + diphosphate. Functionally, terminal uridylyltransferase which is involved in the post-transcriptional editing of mitochondrial RNA, a process involving the addition and deletion of uridine (U) nucleotides in the pre-RNA. Specifically, catalyzes the addition of Us to the 3'-hydroxyl group of guided RNA (gRNA), ribosomal RNA (rRNA) and some mRNAs. As part of the mitochondrial 3' processome (MPsome), catalyzes the primary 3' uridylation of gRNA precursors to facilitate their recognition and to induce their processive 3'-5' degradation by DSS1, and the secondary 3' uridylation of mature gRNAs. Involved in the 3' uridylylation of the long A/U tail of some edited and never-edited mRNAs. Promotes 3' uridylylation-mediated decay of some never-edited mRNAs. Does not mediate RNA-independent UTP polymerization. The sequence is that of Terminal uridylyltransferase 1 from Trypanosoma brucei brucei.